The sequence spans 234 residues: tRNA (guanine-N(1)-)-methyltransferase (234 aa).

Residues Gly-115 and 135 to 140 (VGDYIL) each bind S-adenosyl-L-methionine.

This sequence belongs to the RNA methyltransferase TrmD family. Homodimer.

It localises to the cytoplasm. It catalyses the reaction guanosine(37) in tRNA + S-adenosyl-L-methionine = N(1)-methylguanosine(37) in tRNA + S-adenosyl-L-homocysteine + H(+). In terms of biological role, specifically methylates guanosine-37 in various tRNAs. The chain is tRNA (guanine-N(1)-)-methyltransferase from Rickettsia peacockii (strain Rustic).